A 293-amino-acid chain; its full sequence is Acidic endochitinase SE2 (293 aa).

An N-terminal signal peptide occupies residues 1-25 (MAAKIVSVLFLISLLIFASFESSHG). The region spanning 26–293 (SQIVIYWGQN…GYSSAIKSSV (268 aa)) is the GH18 domain. Disulfide bonds link Cys45–Cys91 and Cys75–Cys81. The active-site Proton donor is Glu151. Cys183 and Cys212 form a disulfide bridge.

The protein belongs to the glycosyl hydrolase 18 family. Chitinase class II subfamily. In terms of tissue distribution, accumulates in leaves during infection.

It is found in the secreted. Its subcellular location is the extracellular space. The enzyme catalyses Random endo-hydrolysis of N-acetyl-beta-D-glucosaminide (1-&gt;4)-beta-linkages in chitin and chitodextrins.. This protein functions as a defense against chitin containing fungal pathogens. This endochitinase also exhibits exochitinase activity, i.e. it is capable of hydrolyzing chito-oligosaccharides, including chitobiose. The polypeptide is Acidic endochitinase SE2 (SE2) (Beta vulgaris (Sugar beet)).